Here is a 250-residue protein sequence, read N- to C-terminus: 2,3-bisphosphoglycerate-dependent phosphoglycerate mutase (250 aa).

Substrate contacts are provided by residues 10-17 (RHGESQWN), 23-24 (TG), arginine 62, 89-92 (ERHY), lysine 100, 116-117 (RR), and 185-186 (GN). Catalysis depends on histidine 11, which acts as the Tele-phosphohistidine intermediate. Glutamate 89 functions as the Proton donor/acceptor in the catalytic mechanism.

It belongs to the phosphoglycerate mutase family. BPG-dependent PGAM subfamily. As to quaternary structure, homodimer.

It carries out the reaction (2R)-2-phosphoglycerate = (2R)-3-phosphoglycerate. The protein operates within carbohydrate degradation; glycolysis; pyruvate from D-glyceraldehyde 3-phosphate: step 3/5. In terms of biological role, catalyzes the interconversion of 2-phosphoglycerate and 3-phosphoglycerate. The protein is 2,3-bisphosphoglycerate-dependent phosphoglycerate mutase of Salmonella agona (strain SL483).